Consider the following 70-residue polypeptide: UPF0270 protein VP2791 (70 aa).

This sequence belongs to the UPF0270 family.

This is UPF0270 protein VP2791 from Vibrio parahaemolyticus serotype O3:K6 (strain RIMD 2210633).